The following is a 187-amino-acid chain: Peptidyl-tRNA hydrolase (187 aa).

Phenylalanine 14 serves as a coordination point for tRNA. Histidine 19 acts as the Proton acceptor in catalysis. TRNA is bound by residues tyrosine 64, asparagine 66, and asparagine 112.

It belongs to the PTH family. Monomer.

The protein localises to the cytoplasm. The enzyme catalyses an N-acyl-L-alpha-aminoacyl-tRNA + H2O = an N-acyl-L-amino acid + a tRNA + H(+). Hydrolyzes ribosome-free peptidyl-tRNAs (with 1 or more amino acids incorporated), which drop off the ribosome during protein synthesis, or as a result of ribosome stalling. Its function is as follows. Catalyzes the release of premature peptidyl moieties from peptidyl-tRNA molecules trapped in stalled 50S ribosomal subunits, and thus maintains levels of free tRNAs and 50S ribosomes. This is Peptidyl-tRNA hydrolase from Oceanobacillus iheyensis (strain DSM 14371 / CIP 107618 / JCM 11309 / KCTC 3954 / HTE831).